A 369-amino-acid chain; its full sequence is Tyrosine-protein phosphatase non-receptor type 5 (369 aa).

Ser-49 carries the post-translational modification Phosphoserine; by PKA. A Phosphothreonine; by MAPK modification is found at Thr-59. The residue at position 72 (Ser-72) is a Phosphoserine; by MAPK. The region spanning 104–359 (LQAEFFEIPM…QFVHHAMSLY (256 aa)) is the Tyrosine-protein phosphatase domain. Residues Asp-265, 300 to 306 (CSAGIGR), and Gln-344 each bind substrate. The Phosphocysteine intermediate role is filled by Cys-300.

The protein belongs to the protein-tyrosine phosphatase family. Non-receptor class subfamily. Post-translationally, phosphorylation at Ser-49 by PKA deactivates PTPN5. Phosphorylation at Thr-59 and Ser-72 by MAPKs stabilizes the phosphatase, dephosphorylation of these sites results in ubiquitin-mediated degradation of the active phosphatase. Expressed in the central nervous system except in the cerebellum. Enriched within the striatum relative to other brain areas.

It is found in the cytoplasm. The catalysed reaction is O-phospho-L-tyrosyl-[protein] + H2O = L-tyrosyl-[protein] + phosphate. May regulate the activity of several effector molecules involved in synaptic plasticity and neuronal cell survival, including MAPKs, Src family kinases and NMDA receptors. The chain is Tyrosine-protein phosphatase non-receptor type 5 (Ptpn5) from Rattus norvegicus (Rat).